Reading from the N-terminus, the 113-residue chain is MAGYRKLGRPTDQRKAMLRNLVTSFLKHGKIETTETRAKETRSLAEKMITLAKRGDLHARRQVLAFVTEEEVVKNLFDNIAPKYAERNGGYTRMYKVGPRRGDGAEVVILELV.

It belongs to the bacterial ribosomal protein bL17 family. Part of the 50S ribosomal subunit. Contacts protein L32.

The chain is Large ribosomal subunit protein bL17 from Clostridium perfringens (strain ATCC 13124 / DSM 756 / JCM 1290 / NCIMB 6125 / NCTC 8237 / Type A).